The chain runs to 397 residues: 2,3-bisphosphoglycerate-independent phosphoglycerate mutase (397 aa).

Belongs to the BPG-independent phosphoglycerate mutase family. A-PGAM subfamily.

It catalyses the reaction (2R)-2-phosphoglycerate = (2R)-3-phosphoglycerate. It participates in carbohydrate degradation; glycolysis; pyruvate from D-glyceraldehyde 3-phosphate: step 3/5. Catalyzes the interconversion of 2-phosphoglycerate and 3-phosphoglycerate. This Methanosarcina mazei (strain ATCC BAA-159 / DSM 3647 / Goe1 / Go1 / JCM 11833 / OCM 88) (Methanosarcina frisia) protein is 2,3-bisphosphoglycerate-independent phosphoglycerate mutase (apgM).